A 199-amino-acid chain; its full sequence is Superoxide dismutase [Mn/Fe] (199 aa).

Residues His-27, His-81, Asp-161, and His-165 each contribute to the Fe(3+) site. Mn(2+) contacts are provided by His-27, His-81, Asp-161, and His-165.

It belongs to the iron/manganese superoxide dismutase family. In terms of assembly, homodimer. Mn(2+) is required as a cofactor. The cofactor is Fe(3+).

It carries out the reaction 2 superoxide + 2 H(+) = H2O2 + O2. Functionally, destroys superoxide anion radicals which are normally produced within the cells and which are toxic to biological systems. Catalyzes the dismutation of superoxide anion radicals into O2 and H2O2 by successive reduction and oxidation of the transition metal ion at the active site. The polypeptide is Superoxide dismutase [Mn/Fe] (sodA) (Staphylococcus epidermidis (strain ATCC 35984 / DSM 28319 / BCRC 17069 / CCUG 31568 / BM 3577 / RP62A)).